We begin with the raw amino-acid sequence, 849 residues long: ATP-binding cassette sub-family B member 6 (849 aa).

Residues 1–25 (MVRLGSYCEHNGSISQAWLDSGLSP) are Lumenal-facing. Residues 1 to 195 (MVRLGSYCEH…TLFLFVLGIR (195 aa)) form a required for the lysosomal targeting region. Residues 1-227 (MVRLGSYCEH…SQPLLRDPNQ (227 aa)) form a required for ATPase activity region. An intrachain disulfide couples cysteine 8 to cysteine 26. Residue asparagine 11 is glycosylated (N-linked (GlcNAc...) asparagine). A helical transmembrane segment spans residues 26-46 (CFYFTLVPSVLLSFSFLLGAL). The Cytoplasmic segment spans residues 47–72 (QSALYARHSTTMEPKYIPRSRLYRLQ). The chain crosses the membrane as a helical span at residues 73-93 (IVLSVVLILQSVIGLIWQAAG). The Lumenal portion of the chain corresponds to 94 to 98 (TDVVY). The helical transmembrane segment at 99–119 (GYMIVHGCLSVVAWGFSLWLL) threads the bilayer. Topologically, residues 120–136 (HLERTRALVREKSRGHG) are cytoplasmic. The helical transmembrane segment at 137 to 157 (VVLLLFWALAFAAENLAFISW) threads the bilayer. The Lumenal portion of the chain corresponds to 158–173 (QSPNWWWLSRDTVPQK). The helical transmembrane segment at 174–194 (VQFGLWITRYVCTLFLFVLGI) threads the bilayer. Residues 195-254 (RAPGRPRKPYIVLINEDERDVETSQPLLRDPNQSTWQGFKKKLLLVMQYIWPRRNIPLQL) lie on the Cytoplasmic side of the membrane. A helical membrane pass occupies residues 255–275 (LVALCMGLMGLERAINVFVPI). One can recognise an ABC transmembrane type-1 domain in the interval 256-547 (VALCMGLMGL…FGTYYRMIQS (292 aa)). Topologically, residues 276 to 291 (YAKKIVDGLTEDSTWN) are lumenal. A helical membrane pass occupies residues 292–312 (ILAVTVCIYVLLKFLQGGGAG). The Cytoplasmic portion of the chain corresponds to 313 to 373 (TTGFLSNLRT…VDRGTSSINS (61 aa)). The helical transmembrane segment at 374–394 (LLSYIVFSILPTIADIVIGIV) threads the bilayer. Residues 395–401 (YFTSSFN) lie on the Lumenal side of the membrane. Residues 402 to 422 (AWFGLIIFVCMTLYLTLTIII) form a helical membrane-spanning segment. The Cytoplasmic segment spans residues 423 to 492 (TEWRTKYRRE…ASLAMLNQTQ (70 aa)). A helical membrane pass occupies residues 493-513 (NLIIGLGLLAGSLLCAYFVTE). At 514-520 (NKFKVGD) the chain is on the lumenal side. A helical membrane pass occupies residues 521–541 (YVLFGTYIIQLYTPLNWFGTY). Topologically, residues 542–849 (YRMIQSSFID…PPKATPRRGH (308 aa)) are cytoplasmic. In terms of domain architecture, ABC transporter spans 581–815 (IEFENVHFSY…GGVYAGMWQK (235 aa)). Residues tyrosine 590 and 614-625 (GPSGSGKSTIIR) contribute to the ATP site. A compositionally biased stretch (low complexity) spans 814-825 (QKQQSGSESSSD). Positions 814-849 (QKQQSGSESSSDSDSERKDRTSEKLQPPKATPRRGH) are disordered. Over residues 827–836 (DSERKDRTSE) the composition is skewed to basic and acidic residues.

This sequence belongs to the ABC transporter superfamily. ABCB family. Heavy Metal importer (TC 3.A.1.210) subfamily. Homodimer. Post-translationally, N-glycosylated.

Its subcellular location is the cell membrane. It is found in the mitochondrion outer membrane. It localises to the endoplasmic reticulum membrane. The protein resides in the golgi apparatus membrane. The protein localises to the endosome membrane. Its subcellular location is the lysosome membrane. It is found in the late endosome membrane. It localises to the early endosome membrane. The protein resides in the secreted. The protein localises to the extracellular exosome. Its subcellular location is the mitochondrion. It is found in the endosome. It localises to the multivesicular body membrane. The protein resides in the melanosome membrane. It catalyses the reaction heme b(in) + ATP + H2O = heme b(out) + ADP + phosphate + H(+). The enzyme catalyses coproporphyrin III(in) + ATP + H2O = coproporphyrin III(out) + ADP + phosphate + H(+). The catalysed reaction is pheophorbide a(in) + ATP + H2O = pheophorbide a(out) + ADP + phosphate + H(+). It carries out the reaction coproporphyrinogen III(in) + ATP + H2O = coproporphyrinogen III(out) + ADP + phosphate + H(+). It catalyses the reaction protoporphyrin IX(in) + ATP + H2O = protoporphyrin IX(out) + ADP + phosphate + H(+). The enzyme catalyses coproporphyrin I(in) + ATP + H2O = coproporphyrin I(out) + ADP + phosphate + H(+). The catalysed reaction is uroporphyrin I(in) + ATP + H2O = uroporphyrin I(out) + ADP + phosphate + H(+). It carries out the reaction uroporphyrin III(in) + ATP + H2O = uroporphyrin III(out) + ADP + phosphate + H(+). Functionally, ATP-dependent transporter that catalyzes the transport of a broad-spectrum of porphyrins from the cytoplasm to the extracellular space through the plasma membrane or into the vesicle lumen. May also function as an ATP-dependent importer of porphyrins from the cytoplasm into the mitochondria, in turn may participate in the de novo heme biosynthesis regulation and in the coordination of heme and iron homeostasis during phenylhydrazine stress. May also play a key role in the early steps of melanogenesis producing PMEL amyloid fibrils. In vitro, it confers to cells a resistance to toxic metal such as arsenic and cadmium and against chemotherapeutics agent such as 5-fluorouracil, SN-38 and vincristin. In addition may play a role in the transition metal homeostasis. This is ATP-binding cassette sub-family B member 6 (abcb6) from Xenopus tropicalis (Western clawed frog).